The primary structure comprises 424 residues: Protein-glutamate methylesterase/protein-glutamine glutaminase (424 aa).

The Response regulatory domain occupies 6–123 (RVLVVDDSAF…SLDDFTRQLT (118 aa)). Residue aspartate 57 is modified to 4-aspartylphosphate. The segment at 177 to 210 (SRLSPGRSPGGKEGVAGAVSAGSTRGEAIRPGKG) is disordered. One can recognise a CheB-type methylesterase domain in the interval 229-423 (RRPGIEVVAI…PAIVALVTGA (195 aa)). Catalysis depends on residues serine 241, histidine 268, and aspartate 365.

The protein belongs to the CheB family. Post-translationally, phosphorylated by CheA. Phosphorylation of the N-terminal regulatory domain activates the methylesterase activity.

It localises to the cytoplasm. It catalyses the reaction [protein]-L-glutamate 5-O-methyl ester + H2O = L-glutamyl-[protein] + methanol + H(+). The catalysed reaction is L-glutaminyl-[protein] + H2O = L-glutamyl-[protein] + NH4(+). Involved in chemotaxis. Part of a chemotaxis signal transduction system that modulates chemotaxis in response to various stimuli. Catalyzes the demethylation of specific methylglutamate residues introduced into the chemoreceptors (methyl-accepting chemotaxis proteins or MCP) by CheR. Also mediates the irreversible deamidation of specific glutamine residues to glutamic acid. This chain is Protein-glutamate methylesterase/protein-glutamine glutaminase, found in Moorella thermoacetica (strain ATCC 39073 / JCM 9320).